The following is a 480-amino-acid chain: Glutamate--tRNA ligase (480 aa).

The short motif at 21–31 (PSPTGYLHVGG) is the 'HIGH' region element. Positions 110, 112, 137, and 139 each coordinate Zn(2+). Positions 248–252 (KLSKR) match the 'KMSKS' region motif. Position 251 (lysine 251) interacts with ATP.

This sequence belongs to the class-I aminoacyl-tRNA synthetase family. Glutamate--tRNA ligase type 1 subfamily. Monomer. Requires Zn(2+) as cofactor.

The protein resides in the cytoplasm. It catalyses the reaction tRNA(Glu) + L-glutamate + ATP = L-glutamyl-tRNA(Glu) + AMP + diphosphate. Catalyzes the attachment of glutamate to tRNA(Glu) in a two-step reaction: glutamate is first activated by ATP to form Glu-AMP and then transferred to the acceptor end of tRNA(Glu). This Haemophilus influenzae (strain 86-028NP) protein is Glutamate--tRNA ligase.